The chain runs to 1866 residues: Protein NLRC5 (1866 aa).

The disordered stretch occupies residues 105 to 135 (GAEGKSQPESQLHHGLKRPHQSCGSSPRRKQ). One can recognise an NACHT domain in the interval 222–539 (RVTVLLGKAG…PKVNKDTLTQ (318 aa)). 228-235 (GKAGMGKT) is a binding site for ATP. LRR repeat units follow at residues 599–622 (LKKL…VDET), 713–737 (MGRL…LVKA), 741–765 (CPQL…IVEV), 769–792 (LPRL…CLAR), 869–892 (GPHL…LMAE), 897–921 (LHIA…VLRA), 930–953 (ELHI…EQKG), 976–1000 (SRRM…ALGG), 1004–1026 (LGHL…RLAQ), 1031–1058 (LGAL…CFST), 1138–1161 (LELQ…CLPQ), 1162–1184 (LPQL…FLLA), 1242–1265 (CKDL…CLLE), 1272–1294 (ISGL…LLET), 1462–1488 (CARL…LLQS), 1493–1516 (LSEL…HLAS), 1521–1544 (CHHL…ALMR), 1554–1577 (RLDL…LSQM), 1578–1600 (TCLQ…HLSE), 1605–1628 (ATSL…HLAT), 1633–1656 (LPEL…QLAE), 1661–1684 (CRRL…GLAQ), 1687–1714 (PQHL…ALDG), 1715–1739 (SPHL…CMEL), 1741–1762 (LLRQ…LLTS), and 1795–1818 (MGRL…LLAE).

Belongs to the NLRP family. Interacts with CHUK and IKBKB; prevents CHUK and IKBKB phosphorylation and inhibits their kinase activity. Interacts with RIGI and IFIH1; blocks the interaction of MAVS to RIGI. Expressed in spleen, thymus, lung, brain, tonsil, heart and prostate.

It localises to the cytoplasm. Functionally, probable regulator of the NF-kappa-B and type I interferon signaling pathways. May also regulate the type II interferon signaling pathway. Plays a role in homeostatic control of innate immunity and in antiviral defense mechanisms. The protein is Protein NLRC5 (NLRC5) of Homo sapiens (Human).